A 324-amino-acid chain; its full sequence is Methyltransferase pytC (324 aa).

This sequence belongs to the methyltransferase superfamily. LaeA methyltransferase family.

It functions in the pathway secondary metabolite biosynthesis. In terms of biological role, methyltransferase; part of the gene cluster that mediates the biosynthesis of pyranterreones, a family of antioxidative compounds. The first step of pyranonigrins biosynthesis is performed by the hybrid PKS-NRPS synthetase pytA that condenses 4 malonyl-CoA units ato the acetyl starter unit by the modular PKS of pytA. The acyl chain is then connected to an L-serine through the amide bond by the modular NRPS of pytA. A tetramic acid is formed and released from the PKS-NRPS pytA to give pyranterreone 5 with the help of the thioesterase pytI. Pyranterreone 5 could be methylated by pytC to afford pyranterreone 6. Both pyranterreones 5 and 6 are subsequently oxidized by the FAD-linked oxidoreductase pytB and the cytochrome P450 monooxygenase pytD to form the fused gamma-pyrone core, resulting in pyranterreones 7 and 11, respectively. The hydroxy group at C-8 of pyranterreones 7 and 11 are dehydrated by the aspartyl protease pytH to form a delta-7 double bond to give pyranterreones 3 and 1, 2 accordingly. The exo-methylene of pyranterreone 3 could be reduced into a pendant methyl by reductase pytE to provide pyranterreone 4, also known as cordylactam. Pyranterreone 4 can be reconverted to pyranterreone 3 through pytB-catalyzed dehydrogenation or further oxidized to pyranterreones 9 and 10. This is Methyltransferase pytC from Aspergillus terreus (strain NIH 2624 / FGSC A1156).